The chain runs to 57 residues: Zinc finger protein MJ0458.1 (57 aa).

4 consecutive short sequence motifs (c(P)XCG motif) follow at residues 8-12 (CISCN), 26-30 (CPNCG), 37-41 (CERCR), and 49-53 (CPKCG). Zn(2+) contacts are provided by C26 and C29. 2 residues coordinate Zn(2+): C49 and C52.

As to quaternary structure, monomer in solution.

In terms of biological role, zinc-binding protein that binds only one zinc ion. This chain is Zinc finger protein MJ0458.1, found in Methanocaldococcus jannaschii (strain ATCC 43067 / DSM 2661 / JAL-1 / JCM 10045 / NBRC 100440) (Methanococcus jannaschii).